The primary structure comprises 125 residues: Small ribosomal subunit protein eS8 (125 aa).

It belongs to the eukaryotic ribosomal protein eS8 family. In terms of assembly, part of the 30S ribosomal subunit.

In Methanocella arvoryzae (strain DSM 22066 / NBRC 105507 / MRE50), this protein is Small ribosomal subunit protein eS8.